Consider the following 262-residue polypeptide: Acyl-[acyl-carrier-protein]--UDP-N-acetylglucosamine O-acyltransferase (262 aa).

This sequence belongs to the transferase hexapeptide repeat family. LpxA subfamily. As to quaternary structure, homotrimer.

It is found in the cytoplasm. It carries out the reaction a (3R)-hydroxyacyl-[ACP] + UDP-N-acetyl-alpha-D-glucosamine = a UDP-3-O-[(3R)-3-hydroxyacyl]-N-acetyl-alpha-D-glucosamine + holo-[ACP]. It participates in glycolipid biosynthesis; lipid IV(A) biosynthesis; lipid IV(A) from (3R)-3-hydroxytetradecanoyl-[acyl-carrier-protein] and UDP-N-acetyl-alpha-D-glucosamine: step 1/6. In terms of biological role, involved in the biosynthesis of lipid A, a phosphorylated glycolipid that anchors the lipopolysaccharide to the outer membrane of the cell. The polypeptide is Acyl-[acyl-carrier-protein]--UDP-N-acetylglucosamine O-acyltransferase (Burkholderia thailandensis (strain ATCC 700388 / DSM 13276 / CCUG 48851 / CIP 106301 / E264)).